The following is a 519-amino-acid chain: Galactan beta-1,4-galactosyltransferase GALS2 (519 aa).

Residues 28 to 48 form a helical membrane-spanning segment; it reads LALMALLVLCTLATLLPFLPS. A GT92 domain is found at 257–471; the sequence is DYLYCGSSLY…YHGSISQRRE (215 aa).

It belongs to the glycosyltransferase 92 family. Expressed in the midrib of mature leaves, root vasculature, flower filaments, siliques and seeds.

Its subcellular location is the golgi apparatus membrane. In terms of biological role, involved in the biosynthesis of beta-1,4-galactan. Beta-1,4-galactans are abundant polysaccharides in plant cell walls and are found as side-chain of rhamnogalacturonan I, which is a major component of pectin. The chain is Galactan beta-1,4-galactosyltransferase GALS2 from Arabidopsis thaliana (Mouse-ear cress).